A 514-amino-acid polypeptide reads, in one-letter code: Nucleus accumbens-associated protein 1 (514 aa).

Residues 30–94 (CDVSVVVKGH…CYTGRLSMNM (65 aa)) form the BTB domain. A Glycyl lysine isopeptide (Lys-Gly) (interchain with G-Cter in SUMO1); alternate cross-link involves residue lysine 167. A Glycyl lysine isopeptide (Lys-Gly) (interchain with G-Cter in SUMO2); alternate cross-link involves residue lysine 167. Lysine 182 is covalently cross-linked (Glycyl lysine isopeptide (Lys-Gly) (interchain with G-Cter in SUMO2)). 2 disordered regions span residues 183–205 (RLWD…RKMA) and 242–279 (PSMS…EEGT). At serine 187 the chain carries Phosphoserine. Over residues 242-251 (PSMSERTSPG) the composition is skewed to polar residues. At serine 245 the chain carries Phosphoserine; by PKC. Residues 252–264 (TSSAYTSDSPSSY) show a composition bias toward low complexity. The segment covering 267–279 (EEDEEEDAGEEGT) has biased composition (acidic residues). Residues lysine 304, lysine 438, lysine 466, and lysine 485 each participate in a glycyl lysine isopeptide (Lys-Gly) (interchain with G-Cter in SUMO2) cross-link. Residues 360-457 (GTNVYITRAQ…DMCTNARRVV (98 aa)) form the BEN domain. Phosphoserine is present on residues serine 492 and serine 496.

In terms of assembly, homooligomer; mediated by the BTB domain. Interacts with HDAC3 and HDAC4. Interacts (via BTB domain) with CUL3, PSMD7 and RCOR1. As to expression, ubiquitously expressed with higher expression in the brain, kidney and liver, and at lower levels in heart, lung and testes.

The protein resides in the nucleus. The protein localises to the cytoplasm. Its function is as follows. Functions as a transcriptional repressor. Seems to function as a transcriptional corepressor in neuronal cells through recruitment of HDAC3 and HDAC4. Contributes to tumor progression, and tumor cell proliferation and survival. This may be mediated at least in part through repressing transcriptional activity of GADD45GIP1. Required for recruiting the proteasome from the nucleus to the cytoplasm and dendritic spines. Involved in the acute behavioral and neurological responses to cocaine and amphetamines. The protein is Nucleus accumbens-associated protein 1 (Nacc1) of Mus musculus (Mouse).